The primary structure comprises 205 residues: Phosphoribosyl-dephospho-CoA transferase (205 aa).

Catalysis depends on residues D134 and D136.

It belongs to the MdcG family.

It carries out the reaction apo-[malonate decarboxylase ACP] + 2'-(5''-triphospho-alpha-D-ribosyl)-3'-dephospho-CoA = holo-[malonate decarboxylase ACP] + diphosphate. Its function is as follows. Transfers 2'-(5-triphosphoribosyl)-3'-dephosphocoenzyme-A to the apo-[acyl-carrier-protein] of the malonate decarboxylase to yield holo-[acyl-carrier-protein]. The polypeptide is Phosphoribosyl-dephospho-CoA transferase (mdcG) (Klebsiella pneumoniae).